The following is a 194-amino-acid chain: Ribonuclease HII (194 aa).

Positions 3–193 constitute an RNase H type-2 domain; it reads ILTAGVDEAG…VRNLLAQQAL (191 aa). Residues D9, E10, and D101 each coordinate a divalent metal cation.

It belongs to the RNase HII family. Mn(2+) serves as cofactor. The cofactor is Mg(2+).

The protein localises to the cytoplasm. It carries out the reaction Endonucleolytic cleavage to 5'-phosphomonoester.. In terms of biological role, endonuclease that specifically degrades the RNA of RNA-DNA hybrids. The protein is Ribonuclease HII of Neisseria gonorrhoeae (strain ATCC 700825 / FA 1090).